Consider the following 289-residue polypeptide: MYG1 protein TC_0665 (289 aa).

It belongs to the MYG1 family.

The chain is MYG1 protein TC_0665 from Chlamydia muridarum (strain MoPn / Nigg).